The chain runs to 142 residues: Small ribosomal subunit protein uS12 (142 aa).

The interval 1–30 (MGKTRGMGAARKLKNHRRRQRWADKSYKKS) is disordered. Basic residues predominate over residues 11–20 (RKLKNHRRRQ). The segment covering 21-30 (RWADKSYKKS) has biased composition (basic and acidic residues). Pro-61 is modified (hydroxyproline).

It belongs to the universal ribosomal protein uS12 family.

This is Small ribosomal subunit protein uS12 (RPS23) from Fragaria ananassa (Strawberry).